An 856-amino-acid chain; its full sequence is DNA mismatch repair protein MutS (856 aa).

609–616 (GPNMSGKS) serves as a coordination point for ATP.

Belongs to the DNA mismatch repair MutS family.

Functionally, this protein is involved in the repair of mismatches in DNA. It is possible that it carries out the mismatch recognition step. This protein has a weak ATPase activity. In Finegoldia magna (strain ATCC 29328 / DSM 20472 / WAL 2508) (Peptostreptococcus magnus), this protein is DNA mismatch repair protein MutS.